An 88-amino-acid chain; its full sequence is Small ribosomal subunit protein uS15 (88 aa).

This sequence belongs to the universal ribosomal protein uS15 family. In terms of assembly, part of the 30S ribosomal subunit. Forms a bridge to the 50S subunit in the 70S ribosome, contacting the 23S rRNA.

In terms of biological role, one of the primary rRNA binding proteins, it binds directly to 16S rRNA where it helps nucleate assembly of the platform of the 30S subunit by binding and bridging several RNA helices of the 16S rRNA. Functionally, forms an intersubunit bridge (bridge B4) with the 23S rRNA of the 50S subunit in the ribosome. In Caldicellulosiruptor saccharolyticus (strain ATCC 43494 / DSM 8903 / Tp8T 6331), this protein is Small ribosomal subunit protein uS15.